The following is a 187-amino-acid chain: GTP cyclohydrolase 1 1 (187 aa).

The protein belongs to the GTP cyclohydrolase I family. Homomer.

The enzyme catalyses GTP + H2O = 7,8-dihydroneopterin 3'-triphosphate + formate + H(+). It participates in cofactor biosynthesis; 7,8-dihydroneopterin triphosphate biosynthesis; 7,8-dihydroneopterin triphosphate from GTP: step 1/1. This Pseudomonas syringae pv. tomato (strain ATCC BAA-871 / DC3000) protein is GTP cyclohydrolase 1 1.